The primary structure comprises 99 residues: Cell division protein FtsB (99 aa).

Over 1 to 3 (MKF) the chain is Cytoplasmic. The helical transmembrane segment at 4-21 (FVIALIVLLGLLQYRLWS) threads the bilayer. At 22–99 (GSNSLPEYFV…GERSVSSPSQ (78 aa)) the chain is on the periplasmic side. Residues 36–73 (IAVQQEGNDKLNERNQVLKEEIIDLKSGTEAIEERARN) are a coiled coil.

The protein belongs to the FtsB family. In terms of assembly, part of a complex composed of FtsB, FtsL and FtsQ.

Its subcellular location is the cell inner membrane. Functionally, essential cell division protein. May link together the upstream cell division proteins, which are predominantly cytoplasmic, with the downstream cell division proteins, which are predominantly periplasmic. This is Cell division protein FtsB from Shewanella sp. (strain W3-18-1).